The following is a 420-amino-acid chain: Exodeoxyribonuclease 7 large subunit (420 aa).

This sequence belongs to the XseA family. Heterooligomer composed of large and small subunits.

It is found in the cytoplasm. It carries out the reaction Exonucleolytic cleavage in either 5'- to 3'- or 3'- to 5'-direction to yield nucleoside 5'-phosphates.. Functionally, bidirectionally degrades single-stranded DNA into large acid-insoluble oligonucleotides, which are then degraded further into small acid-soluble oligonucleotides. In Helicobacter acinonychis (strain Sheeba), this protein is Exodeoxyribonuclease 7 large subunit.